Consider the following 293-residue polypeptide: MEITFQKVEHRYQYKTPFERRALYDVDVSFPSGGYYAIIGHTGSGKSTMIQHLNGLLQPTNGTVQIGEHFISAGKKEKKLKPLRKKVGVVFQFPEHQLFEETVEKDICFGPTNFGVSEEAAKQKAREAIELVGLEPELLARSPFELSGGQMRRVAIAGVLAMEPEVLVLDEPTAGLDPKGQNELMEMFYKLHKEKGLTVILVTHNMEDAAKYAEQIVVMHKGTVFLQGSAEEVFSHADELEKIGVDLPMSLKYKRAIEEKFGISIPKATLSLEDLTHEVVQVLRKGGHESCSS.

Residues 3–246 (ITFQKVEHRY…ADELEKIGVD (244 aa)) form the ABC transporter domain. Position 40–47 (40–47 (GHTGSGKS)) interacts with ATP.

This sequence belongs to the ABC transporter superfamily. Energy-coupling factor EcfA family. As to quaternary structure, forms a stable energy-coupling factor (ECF) transporter complex composed of 2 membrane-embedded substrate-binding proteins (S component), 2 ATP-binding proteins (A component) and 2 transmembrane proteins (T component).

It localises to the cell membrane. ATP-binding (A) component of a common energy-coupling factor (ECF) ABC-transporter complex. Unlike classic ABC transporters this ECF transporter provides the energy necessary to transport a number of different substrates. The sequence is that of Energy-coupling factor transporter ATP-binding protein EcfA2 from Bacillus anthracis.